A 254-amino-acid chain; its full sequence is 5-oxoprolinase subunit A (254 aa).

Belongs to the LamB/PxpA family. Forms a complex composed of PxpA, PxpB and PxpC.

It catalyses the reaction 5-oxo-L-proline + ATP + 2 H2O = L-glutamate + ADP + phosphate + H(+). Its function is as follows. Catalyzes the cleavage of 5-oxoproline to form L-glutamate coupled to the hydrolysis of ATP to ADP and inorganic phosphate. This is 5-oxoprolinase subunit A from Burkholderia thailandensis (strain ATCC 700388 / DSM 13276 / CCUG 48851 / CIP 106301 / E264).